The sequence spans 226 residues: 7-cyano-7-deazaguanine synthase (226 aa).

7 to 17 (ISGGMDSLVTT) is an ATP binding site. Positions 187, 195, 198, and 201 each coordinate Zn(2+).

It belongs to the QueC family. Requires Zn(2+) as cofactor.

It carries out the reaction 7-carboxy-7-deazaguanine + NH4(+) + ATP = 7-cyano-7-deazaguanine + ADP + phosphate + H2O + H(+). Its pathway is purine metabolism; 7-cyano-7-deazaguanine biosynthesis. In terms of biological role, catalyzes the ATP-dependent conversion of 7-carboxy-7-deazaguanine (CDG) to 7-cyano-7-deazaguanine (preQ(0)). This Chlorobium limicola (strain DSM 245 / NBRC 103803 / 6330) protein is 7-cyano-7-deazaguanine synthase.